The primary structure comprises 129 residues: Small ribosomal subunit protein bS6 (129 aa).

Residues Ser100–Glu129 form a disordered region. Residues Lys104–Glu129 show a composition bias toward basic and acidic residues.

It belongs to the bacterial ribosomal protein bS6 family.

Functionally, binds together with bS18 to 16S ribosomal RNA. The polypeptide is Small ribosomal subunit protein bS6 (Vibrio parahaemolyticus serotype O3:K6 (strain RIMD 2210633)).